The primary structure comprises 194 residues: uncharacterized protein (194 aa).

Belongs to the calycin superfamily. Fatty-acid binding protein (FABP) family.

This is an uncharacterized protein from Caenorhabditis elegans.